Here is a 251-residue protein sequence, read N- to C-terminus: Pyridoxine 5'-phosphate synthase (251 aa).

Asn-7 is a 3-amino-2-oxopropyl phosphate binding site. 9-10 (DH) is a 1-deoxy-D-xylulose 5-phosphate binding site. Arg-18 contacts 3-amino-2-oxopropyl phosphate. His-43 serves as the catalytic Proton acceptor. 1-deoxy-D-xylulose 5-phosphate contacts are provided by Arg-45 and His-50. Glu-70 acts as the Proton acceptor in catalysis. Thr-100 lines the 1-deoxy-D-xylulose 5-phosphate pocket. Catalysis depends on His-198, which acts as the Proton donor. 3-amino-2-oxopropyl phosphate is bound by residues Ala-199 and 220–221 (GH).

Belongs to the PNP synthase family. In terms of assembly, homooctamer; tetramer of dimers.

Its subcellular location is the cytoplasm. The enzyme catalyses 3-amino-2-oxopropyl phosphate + 1-deoxy-D-xylulose 5-phosphate = pyridoxine 5'-phosphate + phosphate + 2 H2O + H(+). The protein operates within cofactor biosynthesis; pyridoxine 5'-phosphate biosynthesis; pyridoxine 5'-phosphate from D-erythrose 4-phosphate: step 5/5. Functionally, catalyzes the complicated ring closure reaction between the two acyclic compounds 1-deoxy-D-xylulose-5-phosphate (DXP) and 3-amino-2-oxopropyl phosphate (1-amino-acetone-3-phosphate or AAP) to form pyridoxine 5'-phosphate (PNP) and inorganic phosphate. In Dechloromonas aromatica (strain RCB), this protein is Pyridoxine 5'-phosphate synthase.